The following is a 2159-amino-acid chain: Calpain-type cysteine protease DEK1 (2159 aa).

The first 33 residues, 1-33 (MEGEGHHGVVLACSICGFLFAVLSPFSFWVLWA), serve as a signal peptide directing secretion. Residues 34–70 (VNWRPWRLYSWIYARKWPTYVQGPQLSTLCSLLTLCA) lie on the Extracellular side of the membrane. The chain crosses the membrane as a helical span at residues 71–91 (WLVVISPIAVLLVWGSVLIAL). At 92–95 (MERN) the chain is on the cytoplasmic side. The helical transmembrane segment at 96–116 (IIGLAVIMAGVALLLSFYSIM) threads the bilayer. Over 117-127 (LWWRTQWQSSE) the chain is Extracellular. Residues 128–148 (AVAYLLLLAVCLLCAYDFCAI) form a helical membrane-spanning segment. The Cytoplasmic portion of the chain corresponds to 149 to 164 (YVTAGASASELNSPSG). A helical transmembrane segment spans residues 165–185 (FFFGVSVISLAINMLFICKIL). The Extracellular portion of the chain corresponds to 186 to 236 (FNVSGFDVDEYVRRSYKFAYSDCVEVAPVSCSPEPPDPSELYMTKSSRVKH). A helical transmembrane segment spans residues 237 to 257 (LGLLYISSLLVLVGYSILYGL). Residues 258 to 264 (TSKEARW) lie on the Cytoplasmic side of the membrane. Residues 265–285 (LGALTSVAVVILDWNLGLCSF) traverse the membrane as a helical segment. Residues 286–294 (RFELLKSRM) are Extracellular-facing. A helical transmembrane segment spans residues 295–315 (IVLFVAGTSRAFLVSFGVHYW). At 316-320 (YLGHC) the chain is on the cytoplasmic side. Residues 321–341 (ISYAFVASVLLSAAVSSWLSI) traverse the membrane as a helical segment. Residues 342 to 623 (SNPSVARIDA…LIFHHLAGSP (282 aa)) lie on the Extracellular side of the membrane. The disordered stretch occupies residues 365 to 409 (RKGQNSSSNSSEGCGSSVKRSSGSVEAGQNGNAMDSMYRSNSQSD). The segment covering 369-381 (NSSSNSSEGCGSS) has biased composition (low complexity). The segment covering 382–409 (VKRSSGSVEAGQNGNAMDSMYRSNSQSD) has biased composition (polar residues). Residues 624–644 (IRAFIVFTVMFIIETATVAIY) traverse the membrane as a helical segment. Topologically, residues 645–660 (RPETIKVINATHEQFE) are cytoplasmic. A helical transmembrane segment spans residues 661–681 (FGFSILLLSPVVCSIMAFIWS). The Extracellular segment spans residues 682–694 (LRAEEMLMTSKPQ). Residues 695–715 (KYGFIAWLLSTCVGLFLSFLS) traverse the membrane as a helical segment. The Cytoplasmic portion of the chain corresponds to 716 to 719 (KSSV). Residues 720-740 (ILGLSLTVPLMVACLSFAVPI) form a helical membrane-spanning segment. At 741-770 (WIRNGYSFWIPGREFANRENVSQAPGEKER) the chain is on the extracellular side. The helical transmembrane segment at 771 to 791 (ALFVITIAVFTASIIGLGAIV) threads the bilayer. Residues 792 to 822 (SAKPLDALGYKGWDADKNSSYSPYATSMYLG) are Cytoplasmic-facing. Residues 823–843 (WALSSTIAVITTGLIPIVAWF) form a helical membrane-spanning segment. Over 844–853 (ATYRFSPSSA) the chain is Extracellular. Residues 854-874 (ICVGLFATVLVSFCGASYWGV) traverse the membrane as a helical segment. Residues 875–887 (VNSREDGVPLKAD) are Cytoplasmic-facing. The chain crosses the membrane as a helical span at residues 888 to 908 (FLAALLPLLCIPAFFSLFTGL). Residues 909–921 (YKWKDDDWKISRG) lie on the Extracellular side of the membrane. Residues 922 to 942 (VYLFVGMGMLLLFGAVAAVIV) form a helical membrane-spanning segment. Topologically, residues 943-946 (TIRP) are cytoplasmic. A helical membrane pass occupies residues 947–967 (WTVGVACLVAILFLVFVIGVI). Residues 968–981 (HYWTSNNFYLTRTQ) lie on the Extracellular side of the membrane. The helical transmembrane segment at 982–1002 (MLLVCSIAFLLALAAFLMGLF) threads the bilayer. The Cytoplasmic segment spans residues 1003-1016 (HGKPFVGASIGYFS). A helical membrane pass occupies residues 1017–1037 (FIFLLTGRALTVLLSPPIVVY). Residues 1038–1060 (SPRVLPVYVYDAHADSAKNVSYA) are Extracellular-facing. The helical transmembrane segment at 1061–1081 (FLILYGIALATEVWGVIASLI) threads the bilayer. Topologically, residues 1082–2159 (MNPPFVGAGV…SKASIRLEAV (1078 aa)) are cytoplasmic. Phosphoserine occurs at positions 1371 and 1376. Positions 1417 to 1609 (TGRHCGELDL…MSPAEYGFFD (193 aa)) constitute a Calpain catalytic 1 domain. S1665 carries the post-translational modification Phosphoserine. Positions 1703 to 2005 (NFTDQEFPPE…FRSIYVCRVY (303 aa)) constitute a Calpain catalytic 2 domain. Residues C1769, H1927, and N1947 contribute to the active site.

The protein belongs to the peptidase C2 family. Post-translationally, autocatalytic proteolytic cleavage leading to the production of mainly cytoplasmic localized subproducts of about 85 and 120 kDa. In terms of tissue distribution, expressed in most tissues at low levels ranging from 30 to 55 ppm. Present in all endosperm cells at transcript level, but confined to aleurones at protein level.

It localises to the endoplasmic reticulum membrane. It is found in the cytoplasm. The protein localises to the cell membrane. The protein resides in the endosome membrane. Its function is as follows. Essential protease involved in epiderm development. Required for aleurone cell development in the endosperm probably by maintaining and restricting the aleurone and embryonic epidermal L1 cell-layer fates as well as meristems organization. Involved in the maintenance of adaxial/abaxial axis information in developing leaves, probably by regulating cell proliferation and expansion. Does not need calcium ions to be active. In Zea mays (Maize), this protein is Calpain-type cysteine protease DEK1 (DEK1).